The following is a 273-amino-acid chain: N-alpha-acetyltransferase 30 (273 aa).

Disordered stretches follow at residues 1-39 (MADA…HQLN) and 62-85 (QKTR…PNGL). Residues 125-273 (RYVRYESELQ…DALRLKLWLR (149 aa)) enclose the N-acetyltransferase domain.

The protein belongs to the acetyltransferase family. MAK3 subfamily. In terms of assembly, component of the N-terminal acetyltransferase C (NatC) complex.

It localises to the cytoplasm. Its subcellular location is the nucleus. The catalysed reaction is N-terminal L-methionyl-L-leucyl-[protein] + acetyl-CoA = N-terminal N(alpha)-acetyl-L-methionyl-L-leucyl-[protein] + CoA + H(+). It catalyses the reaction N-terminal L-methionyl-L-isoleucyl-[protein] + acetyl-CoA = N-terminal N(alpha)-acetyl-L-methionyl-L-isoleucyl-[protein] + CoA + H(+). The enzyme catalyses N-terminal L-methionyl-L-phenylalanyl-[protein] + acetyl-CoA = N-terminal N(alpha)-acetyl-L-methionyl-L-phenylalanyl-[protein] + CoA + H(+). It carries out the reaction N-terminal L-methionyl-L-tryptophyl-[protein] + acetyl-CoA = N-terminal N(alpha)-acetyl-L-methionyl-L-tryptophyl-[protein] + CoA + H(+). The catalysed reaction is N-terminal L-methionyl-L-tyrosyl-[protein] + acetyl-CoA = N-terminal N(alpha)-acetyl-L-methionyl-L-tyrosyl-[protein] + CoA + H(+). Catalytic subunit of the N-terminal acetyltransferase C (NatC) complex. Catalyzes acetylation of the N-terminal methionine residues of peptides beginning with Met-Leu-Ala and Met-Leu-Gly. N-terminal acetylation protects proteins from ubiquitination and degradation by the N-end rule pathway. This chain is N-alpha-acetyltransferase 30 (naa30), found in Xenopus laevis (African clawed frog).